Reading from the N-terminus, the 244-residue chain is MDHFPLKRPHFFFTTAPLPCPYVSGRLERKIVTELNGTDADSLHEALSRAGFRRSHSIAYTPACPGCSACIPVRIVADDFVPDRTMRRIWRANGGLTASKVPARASADQFRLFARYQESRHSGGDMALMGFYDYRSMVEDSPIDTFIVEFRDGDGNLAAACLADRMNDGLSAVYSFFDPDLASRSLGTFMVLWLVEEAKRMALPFVYLGYWIGESRKMSYKTRYQPLEAFGPDGWKRFAPGDGA.

This sequence belongs to the R-transferase family. Bpt subfamily.

The protein localises to the cytoplasm. It carries out the reaction N-terminal L-glutamyl-[protein] + L-leucyl-tRNA(Leu) = N-terminal L-leucyl-L-glutamyl-[protein] + tRNA(Leu) + H(+). The catalysed reaction is N-terminal L-aspartyl-[protein] + L-leucyl-tRNA(Leu) = N-terminal L-leucyl-L-aspartyl-[protein] + tRNA(Leu) + H(+). Functions in the N-end rule pathway of protein degradation where it conjugates Leu from its aminoacyl-tRNA to the N-termini of proteins containing an N-terminal aspartate or glutamate. This chain is Aspartate/glutamate leucyltransferase, found in Paramagnetospirillum magneticum (strain ATCC 700264 / AMB-1) (Magnetospirillum magneticum).